Consider the following 1039-residue polypeptide: Beta-galactosidase (1039 aa).

Residues N103 and D201 each contribute to the substrate site. D201 serves as a coordination point for Na(+). 3 residues coordinate Mg(2+): E415, H417, and E460. Substrate is bound by residues E460 and 536-539 (EYAH). The active-site Proton donor is the E460. Catalysis depends on E536, which acts as the Nucleophile. N596 lines the Mg(2+) pocket. Na(+) is bound by residues F600 and N603. Substrate is bound by residues N603 and W1012.

It belongs to the glycosyl hydrolase 2 family. In terms of assembly, homotetramer. It depends on Mg(2+) as a cofactor. Na(+) is required as a cofactor.

The enzyme catalyses Hydrolysis of terminal non-reducing beta-D-galactose residues in beta-D-galactosides.. Its activity is regulated as follows. Inhibited by zinc, copper and nickel ions. Activated by 2-mercaptoethanol and inhibited by EDTA in vitro. The polypeptide is Beta-galactosidase (lacZ) (Pseudoalteromonas haloplanktis (Alteromonas haloplanktis)).